Reading from the N-terminus, the 640-residue chain is Threonine--tRNA ligase (640 aa).

Residues 1-60 (MKITFPDGAVKEFEPGVSTADIAASISPGLKKKALAGKLNGELLDLVTPIHEDGAIEIVT) form the TGS domain. The segment at 241 to 538 (DHRKLGKELE…LIEEYKGAFP (298 aa)) is catalytic. The Zn(2+) site is built by Cys-334, His-385, and His-515.

It belongs to the class-II aminoacyl-tRNA synthetase family. Homodimer. It depends on Zn(2+) as a cofactor.

It localises to the cytoplasm. The catalysed reaction is tRNA(Thr) + L-threonine + ATP = L-threonyl-tRNA(Thr) + AMP + diphosphate + H(+). Its function is as follows. Catalyzes the attachment of threonine to tRNA(Thr) in a two-step reaction: L-threonine is first activated by ATP to form Thr-AMP and then transferred to the acceptor end of tRNA(Thr). Also edits incorrectly charged L-seryl-tRNA(Thr). This is Threonine--tRNA ligase from Listeria monocytogenes serovar 1/2a (strain ATCC BAA-679 / EGD-e).